A 405-amino-acid chain; its full sequence is Probable tRNA sulfurtransferase (405 aa).

In terms of domain architecture, THUMP spans 60–165 (ETIDQRLKLV…QDAIYISNQL (106 aa)). Residues 183 to 184 (ML), 208 to 209 (HF), Arg265, Gly287, and Gln296 contribute to the ATP site.

This sequence belongs to the ThiI family.

It is found in the cytoplasm. It catalyses the reaction [ThiI sulfur-carrier protein]-S-sulfanyl-L-cysteine + a uridine in tRNA + 2 reduced [2Fe-2S]-[ferredoxin] + ATP + H(+) = [ThiI sulfur-carrier protein]-L-cysteine + a 4-thiouridine in tRNA + 2 oxidized [2Fe-2S]-[ferredoxin] + AMP + diphosphate. The enzyme catalyses [ThiS sulfur-carrier protein]-C-terminal Gly-Gly-AMP + S-sulfanyl-L-cysteinyl-[cysteine desulfurase] + AH2 = [ThiS sulfur-carrier protein]-C-terminal-Gly-aminoethanethioate + L-cysteinyl-[cysteine desulfurase] + A + AMP + 2 H(+). It functions in the pathway cofactor biosynthesis; thiamine diphosphate biosynthesis. In terms of biological role, catalyzes the ATP-dependent transfer of a sulfur to tRNA to produce 4-thiouridine in position 8 of tRNAs, which functions as a near-UV photosensor. Also catalyzes the transfer of sulfur to the sulfur carrier protein ThiS, forming ThiS-thiocarboxylate. This is a step in the synthesis of thiazole, in the thiamine biosynthesis pathway. The sulfur is donated as persulfide by IscS. This chain is Probable tRNA sulfurtransferase, found in Lactobacillus johnsonii (strain CNCM I-12250 / La1 / NCC 533).